A 629-amino-acid polypeptide reads, in one-letter code: tRNA uridine 5-carboxymethylaminomethyl modification enzyme MnmG (629 aa).

FAD contacts are provided by residues 13 to 18 (GGGHAG), valine 125, and serine 180. An NAD(+)-binding site is contributed by 273-287 (GPRYCPSIEDKVMRF). Glutamine 370 contributes to the FAD binding site.

This sequence belongs to the MnmG family. As to quaternary structure, homodimer. Heterotetramer of two MnmE and two MnmG subunits. FAD is required as a cofactor.

Its subcellular location is the cytoplasm. NAD-binding protein involved in the addition of a carboxymethylaminomethyl (cmnm) group at the wobble position (U34) of certain tRNAs, forming tRNA-cmnm(5)s(2)U34. The protein is tRNA uridine 5-carboxymethylaminomethyl modification enzyme MnmG of Enterobacter sp. (strain 638).